A 250-amino-acid polypeptide reads, in one-letter code: Sulfate transporter CysZ (250 aa).

4 helical membrane passes run 27–47 (FVVL…YYLF), 64–84 (FLSW…LATF), 150–170 (FLLL…WFLF), and 210–230 (MLVA…PVAV).

This sequence belongs to the CysZ family.

Its subcellular location is the cell inner membrane. In terms of biological role, high affinity, high specificity proton-dependent sulfate transporter, which mediates sulfate uptake. Provides the sulfur source for the cysteine synthesis pathway. The protein is Sulfate transporter CysZ of Vibrio cholerae serotype O1 (strain ATCC 39541 / Classical Ogawa 395 / O395).